We begin with the raw amino-acid sequence, 178 residues long: Cytochrome b6-f complex iron-sulfur subunit (178 aa).

A helical membrane pass occupies residues 20 to 42 (LLTFGTATGVALGALYPVANYFM). In terms of domain architecture, Rieske spans 71-161 (NHPAGDRSLV…IDVEDDKVFV (91 aa)). Residues C107, H109, C125, and H128 each contribute to the [2Fe-2S] cluster site. A disulfide bridge connects residues C112 and C127.

The protein belongs to the Rieske iron-sulfur protein family. In terms of assembly, the 4 large subunits of the cytochrome b6-f complex are cytochrome b6, subunit IV (17 kDa polypeptide, PetD), cytochrome f and the Rieske protein, while the 4 small subunits are PetG, PetL, PetM and PetN. The complex functions as a dimer. The cofactor is [2Fe-2S] cluster.

It is found in the cellular thylakoid membrane. It carries out the reaction 2 oxidized [plastocyanin] + a plastoquinol + 2 H(+)(in) = 2 reduced [plastocyanin] + a plastoquinone + 4 H(+)(out). Functionally, component of the cytochrome b6-f complex, which mediates electron transfer between photosystem II (PSII) and photosystem I (PSI), cyclic electron flow around PSI, and state transitions. This is Cytochrome b6-f complex iron-sulfur subunit from Prochlorococcus marinus (strain MIT 9211).